The primary structure comprises 301 residues: Phosducin-like protein (301 aa).

Thr2 carries the post-translational modification N-acetylthreonine. A disordered region spans residues 17–60 (YSTSEDEDSDHEDKDRGRGAPAISSTPAEAELAGEGISINTGPK). Residues Ser20, Ser25, Ser226, Ser293, and Ser296 each carry the phosphoserine modification. The region spanning 36-299 (APAISSTPAE…TCHSEDSDLE (264 aa)) is the Phosducin domain. Residues 158–301 (FKQVFEIPSG…HSEDSDLEID (144 aa)) are thioredoxin fold.

This sequence belongs to the phosducin family. In terms of assembly, forms a complex with the beta and gamma subunits of the GTP-binding protein, transducin. Interacts with the CCT chaperonin complex.

It localises to the cell projection. It is found in the cilium. Functionally, functions as a co-chaperone for CCT in the assembly of heterotrimeric G protein complexes, facilitates the assembly of both Gbeta-Ggamma and RGS-Gbeta5 heterodimers. Also acts as a positive regulator of hedgehog signaling and regulates ciliary function. In Mus musculus (Mouse), this protein is Phosducin-like protein (Pdcl).